A 430-amino-acid polypeptide reads, in one-letter code: UDP-N-acetylglucosamine 1-carboxyvinyltransferase 1 (430 aa).

K22 to N23 serves as a coordination point for phosphoenolpyruvate. R93 lines the UDP-N-acetyl-alpha-D-glucosamine pocket. The Proton donor role is filled by C117. The residue at position 117 (C117) is a 2-(S-cysteinyl)pyruvic acid O-phosphothioketal. UDP-N-acetyl-alpha-D-glucosamine contacts are provided by residues R122 to L126, D305, and V327.

The protein belongs to the EPSP synthase family. MurA subfamily.

The protein resides in the cytoplasm. It catalyses the reaction phosphoenolpyruvate + UDP-N-acetyl-alpha-D-glucosamine = UDP-N-acetyl-3-O-(1-carboxyvinyl)-alpha-D-glucosamine + phosphate. Its pathway is cell wall biogenesis; peptidoglycan biosynthesis. In terms of biological role, cell wall formation. Adds enolpyruvyl to UDP-N-acetylglucosamine. This chain is UDP-N-acetylglucosamine 1-carboxyvinyltransferase 1, found in Listeria monocytogenes serovar 1/2a (strain ATCC BAA-679 / EGD-e).